The chain runs to 538 residues: Mevalonate kinase erg12 (538 aa).

The tract at residues 1–87 (MGNPRGRRTN…RNMSRKPSSP (87 aa)) is disordered. Over residues 9 to 29 (TNGSIKTSKGTQRGTVSNLLS) the composition is skewed to polar residues. Residues 57-69 (TTPSTTESTLKTT) are compositionally biased toward low complexity. ATP is bound by residues K99, S231, and 236 to 242 (GAGLGSS). Residues S242 and E287 each coordinate Mg(2+). Residue D298 is the Proton acceptor of the active site.

Belongs to the GHMP kinase family. Mevalonate kinase subfamily. Homodimer. Requires Mg(2+) as cofactor.

It is found in the cytoplasm. Its subcellular location is the cytosol. The enzyme catalyses (R)-mevalonate + ATP = (R)-5-phosphomevalonate + ADP + H(+). Its pathway is isoprenoid biosynthesis; isopentenyl diphosphate biosynthesis via mevalonate pathway; isopentenyl diphosphate from (R)-mevalonate: step 1/3. Its function is as follows. Mevalonate kinase; part of the second module of ergosterol biosynthesis pathway that includes the middle steps of the pathway. Erg12 converts mevalonate into 5-phosphomevalonate. The second module is carried out in the vacuole and involves the formation of farnesyl diphosphate, which is also an important intermediate in the biosynthesis of ubiquinone, dolichol, heme and prenylated proteins. Activity by the mevalonate kinase erg12 (AFUA_4G07780) first converts mevalonate into 5-phosphomevalonate. 5-phosphomevalonate is then further converted to 5-diphosphomevalonate by the phosphomevalonate kinase erg8 (AFUA_5G10680). The diphosphomevalonate decarboxylase mvd1 (AFUA_4G07130) then produces isopentenyl diphosphate. The isopentenyl-diphosphate delta-isomerase idi1 (AFUA_6G11160) then catalyzes the 1,3-allylic rearrangement of the homoallylic substrate isopentenyl (IPP) to its highly electrophilic allylic isomer, dimethylallyl diphosphate (DMAPP). Finally the farnesyl diphosphate synthase erg20 (AFUA_5G02450) catalyzes the sequential condensation of isopentenyl pyrophosphate with dimethylallyl pyrophosphate, and then with the resultant geranylpyrophosphate to the ultimate product farnesyl pyrophosphate. The sequence is that of Mevalonate kinase erg12 from Aspergillus fumigatus (strain ATCC MYA-4609 / CBS 101355 / FGSC A1100 / Af293) (Neosartorya fumigata).